Here is a 798-residue protein sequence, read N- to C-terminus: Suppressor of spindle checkpoint defect 1 (798 aa).

Residues 339 to 359 are a coiled coil; it reads ESIQQSQVNVDDMCNRIANME.

The protein belongs to the APC5 family. In terms of assembly, the APC/C complex is probably composed of at least 12 subunits: apc-2, apc-10, apc-11, cdc-26, emb-1, emb-27, emb-30, mat-1, mat-2, mat-3, such-1 and gfi-3. Expressed in head neurons, vulval precursor cells and in mature sperm stored in the spermatheca.

It functions in the pathway protein modification; protein ubiquitination. In terms of biological role, probable component of the anaphase promoting complex/cyclosome (APC/C), a cell cycle-regulated E3 ubiquitin ligase that controls progression through mitosis and the G1 phase of the cell cycle. The APC/C complex acts by mediating ubiquitination and subsequent degradation of target proteins. Required for the metaphase to anaphase transition in meiosis. Plays a role in the segregation of DNA and centrioles during meiosis in male germ cells. The protein is Suppressor of spindle checkpoint defect 1 of Caenorhabditis elegans.